The sequence spans 34 residues: Omega/M-ectatotoxin-Et1a subunit B (34 aa).

Cysteines 10 and 32 form a disulfide.

This sequence belongs to the ectatomin family. Ectatomin-Et subfamily. In terms of assembly, heterodimer of an A and a B chain; disulfide-linked. In terms of tissue distribution, expressed by the venom gland.

The protein localises to the secreted. It is found in the target cell membrane. Algogenic for animals, human and insects. At high concentrations (0.5-1 uM), it acts as a pore-forming protein that forms nonselective cation channels both in cell and artificial membranes. It is weakly selective for cation over anions channel conductance is identical in both directions. At lower concentrations (1-10 nM), this heterodimer inhibits cardiac L-type calcium currents in isolated rat cardiac ventricular myocytes. This chain is Omega/M-ectatotoxin-Et1a subunit B, found in Ectatomma tuberculatum (Selva ant).